The primary structure comprises 1406 residues: Carboxypeptidase D (1406 aa).

An N-terminal signal peptide occupies residues 1 to 25 (MPTLGLLFASIGIAVLAMGVPHCRG). Topologically, residues 26–1312 (YTIKEDESFL…VNEHVFGLPR (1287 aa)) are extracellular. Peptidase M14 domains lie at 39 to 335 (HYAS…LRQA) and 455 to 760 (EHHN…IEQV). Positions 101 and 104 each coordinate Zn(2+). The N-linked (GlcNAc...) asparagine glycan is linked to asparagine 133. Cystine bridges form between cysteine 156-cysteine 309, cysteine 236-cysteine 237, and cysteine 268-cysteine 308. Histidine 217 provides a ligand contact to Zn(2+). An N-linked (GlcNAc...) asparagine glycan is attached at asparagine 269. Glutamate 305 functions as the Proton donor/acceptor in the catalytic mechanism. N-linked (GlcNAc...) asparagine glycosylation is present at asparagine 458. 2 residues coordinate Zn(2+): histidine 517 and glutamate 520. Asparagine 549 and asparagine 612 each carry an N-linked (GlcNAc...) asparagine glycan. A Zn(2+)-binding site is contributed by histidine 626. Residue asparagine 652 is glycosylated (N-linked (GlcNAc...) asparagine). Catalysis depends on glutamate 730, which acts as the Proton donor/acceptor. N-linked (GlcNAc...) asparagine glycosylation is found at asparagine 787, asparagine 808, asparagine 981, asparagine 1152, and asparagine 1251. The region spanning 863–1121 (RYHTNPQVRA…DKIKNFLALV (259 aa)) is the Peptidase M14 3 domain. Residues 1313 to 1333 (FLFILCASVLIIVGVIVCVLC) form a helical membrane-spanning segment. Over 1334-1406 (AQFWFYRRHR…TNYSFIIQAA (73 aa)) the chain is Cytoplasmic. A Cell attachment site motif is present at residues 1343-1345 (RGD). Position 1380 is a phosphoserine (serine 1380).

It belongs to the peptidase M14 family. In terms of assembly, monomer. Requires Zn(2+) as cofactor. As to expression, expressed in the central nervous system (CNS) of adults and larvae. In the adult brain, increased levels of expression in the mushroom body (MB) and neurosecretory cells.

Its subcellular location is the membrane. The protein resides in the cytoplasm. The protein localises to the perinuclear region. It is found in the golgi apparatus. It localises to the trans-Golgi network. Its subcellular location is the secreted. It carries out the reaction Releases C-terminal Arg and Lys from polypeptides.. Its activity is regulated as follows. Inhibited by 2-guanidinoethylmercaptosuccinic acid (GEMSA). In terms of biological role, metallocarboxypeptidase that catalyzes the release of C-terminal arginine or lysine residues from peptides and proteins. Functionally important for processing a broad range of proteins including growth factors, peptide hormones (such as Akh) and neuropeptides. Consequently, it is involved in a wide range of processes including viability, memory formation, locomotive activity, wing formation, and peptide-regulated behaviors such as starvation-induced hyperactivity, appetitive gustatory preference, and cold and ethanol sensitivity. Key enzyme in neuropeptide processing. Involved in regulation of memory formation, possibly via the insulin pathway in neurosecretory cells. This Drosophila melanogaster (Fruit fly) protein is Carboxypeptidase D.